Reading from the N-terminus, the 102-residue chain is Trans-acting regulatory protein HvrA (102 aa).

The DNA-binding element occupies 80-85 (RGRKPK).

Belongs to the histone-like protein H-NS family. As to quaternary structure, homodimer that oligomerizes on DNA into higher-order complexes that form bridges between disparate regions of DNA compacting it.

The protein resides in the cytoplasm. Its subcellular location is the nucleoid. A dim-light trans-acting activator of Puf and Puh expression, that has no effect on the expression of the Puc operon. Responsible for regulating light-harvesting-I and reaction center structural gene expression differentially from that of light-harvesting-II expression in response to alterations in light. Proper light regulation of light-harvesting and reaction center polypeptide synthesis is an important physiological trait that enables cells to adapt to ever-changing environmental conditions of light intensity. The protein is Trans-acting regulatory protein HvrA (hvrA) of Rhodobacter capsulatus (Rhodopseudomonas capsulata).